The chain runs to 188 residues: GMP synthase [glutamine-hydrolyzing] subunit A (188 aa).

In terms of domain architecture, Glutamine amidotransferase type-1 spans 1-188; it reads MIIIMDNGGQ…RNFAKICGEL (188 aa). Catalysis depends on Cys78, which acts as the Nucleophile. Catalysis depends on residues His165 and Glu167.

Heterodimer composed of a glutamine amidotransferase subunit (A) and a GMP-binding subunit (B).

The catalysed reaction is XMP + L-glutamine + ATP + H2O = GMP + L-glutamate + AMP + diphosphate + 2 H(+). It participates in purine metabolism; GMP biosynthesis; GMP from XMP (L-Gln route): step 1/1. Its function is as follows. Catalyzes the synthesis of GMP from XMP. In Pyrococcus furiosus (strain ATCC 43587 / DSM 3638 / JCM 8422 / Vc1), this protein is GMP synthase [glutamine-hydrolyzing] subunit A.